Consider the following 411-residue polypeptide: MSSTMSADQSNRARPVIRIKENPEDFTVEEVADIPKSDNGKYTIIKAEIIDWDTNRIVEEIASALRISRKRISYAGTKDKRARKIQYFCINAPVDVSVLAFKGFRIIDRFRSDHYLRLGDLTANHFRIRFQGASDDYIEQRYEKMMECGGFPNYFGQQRFGSRRRNTHDVGRLIVTGRYEDAVRLYLYDERYDIEDYRREFIETLDYNRALEKFPRTLRFERSIIGYYAQHHTFKGAFDALPKNLSIMFVHAYQSYLFNRMLSLRIEKYGLNRAIPGDTAFPVDRYFNPDKSRPVEVNEVNVDTINQLIERDRLRVALPIIGSEVGPDQSDFGEIEKKILEEEHVDRSMFRNSEYPHLSSTGDRRIVSAKPVDFSVSNSVMDFTLGRGIYATTLISTFGDLVDFDAESDGF.

The Nucleophile role is filled by Asp79. Residues 150–369 form the TRUD domain; sequence GFPNYFGQQR…STGDRRIVSA (220 aa).

Belongs to the pseudouridine synthase TruD family.

The catalysed reaction is uridine(13) in tRNA = pseudouridine(13) in tRNA. Functionally, could be responsible for synthesis of pseudouridine from uracil-13 in transfer RNAs. In Thermoplasma acidophilum (strain ATCC 25905 / DSM 1728 / JCM 9062 / NBRC 15155 / AMRC-C165), this protein is Probable tRNA pseudouridine synthase D.